A 209-amino-acid chain; its full sequence is Response regulator protein VraR (209 aa).

One can recognise a Response regulatory domain in the interval 4-120 (KVLFVDDHEM…DIADAVRKTY (117 aa)). Residue D55 is modified to 4-aspartylphosphate. Residues 141-206 (RAELYEMLTE…QAVIYAFQHN (66 aa)) form the HTH luxR-type domain. The H-T-H motif DNA-binding region spans 165-184 (NQEIASASHITIKTVKTHVS).

Phosphorylated by VraS.

It localises to the cytoplasm. In terms of biological role, member of the two-component regulatory system VraS/VraR involved in the control of the cell wall peptidoglycan biosynthesis. This is Response regulator protein VraR (vraR) from Staphylococcus epidermidis (strain ATCC 35984 / DSM 28319 / BCRC 17069 / CCUG 31568 / BM 3577 / RP62A).